A 331-amino-acid polypeptide reads, in one-letter code: Ornithine lipid hydroxylase OlsE (331 aa).

The next 5 helical transmembrane spans lie at 13–33 (VSSL…YFAF), 37–57 (MHLL…ALFE), 85–105 (GGVQ…ATVA), 120–140 (WPMA…LYMA), and 189–209 (LLGA…FIGL). Residues 126-260 (VVLGLVIAEF…LVIWDQLLGT (135 aa)) enclose the Fatty acid hydroxylase domain.

It belongs to the sterol desaturase family.

Its subcellular location is the cell inner membrane. It functions in the pathway lipid metabolism. In terms of biological role, involved in the biosynthesis of ornithine lipids (OLs), which are phosphorus-free membrane lipids. Is responsible for the hydroxylation of OL within the ornithine moiety. This Rhizobium tropici protein is Ornithine lipid hydroxylase OlsE.